Consider the following 248-residue polypeptide: Ribosomal RNA small subunit methyltransferase G (248 aa).

S-adenosyl-L-methionine is bound by residues Gly85, Phe90, 108–110 (DSS), 137–138 (AE), and Arg156.

The protein belongs to the methyltransferase superfamily. RNA methyltransferase RsmG family.

It is found in the cytoplasm. Functionally, specifically methylates the N7 position of a guanine in 16S rRNA. This is Ribosomal RNA small subunit methyltransferase G from Prochlorococcus marinus (strain NATL2A).